Here is an 871-residue protein sequence, read N- to C-terminus: MAEEFVTLKDVGMDFTLGDWEQLGLEQGDTFWDTALDNCQDLFLLDPPRPNLTSHPDGSEDLEPLAGGSPEATSPDVTETKNSPLMEDFFEEGFSQEIIEMLSKDGFWNSNFGEACIEDTWLDSLLGDPESLLRSDIATNGESPTECKSHELKRGLSPVSTVSTGEDSMVHNVSEKTLTPAKSKEYRGEFFSYSDHSQQDSVQEGEKPYQCSECGKSFSGSYRLTQHWITHTREKPTVHQECEQGFDRNASLSVYPKTHTGYKFYVCNEYGTTFSQSTYLWHQKTHTGEKPCKSQDSDHPPSHDTQPGEHQKTHTDSKSYNCNECGKAFTRIFHLTRHQKIHTRKRYECSKCQATFNLRKHLIQHQKTHAAKTTSECQECGKIFRHSSLLIEHQALHAGEEPYKCNERGKSFRHNSTLKIHQRVHSGEKPYKCSECGKAFHRHTHLNEHRRIHTGYRPHKCQECVRSFSRPSHLMRHQAIHTAEKPYSCAECKETFSDNNRLVQHQKMHTVKTPYECQECGERFICGSTLKCHESVHAREKQGFFVSGKILDQNPEQKEKCFKCNKCEKTFSCSKYLTQHERIHTRGVKPFECDQCGKAFGQSTRLIHHQRIHSRVRLYKWGEQGKAISSASLIKLQSFHTKEHPFKCNECGKTFSHSAHLSKHQLIHAGENPFKCSKCDRVFTQRNYLVQHERTHARKKPLVCNECGKTFRQSSCLSKHQRIHSGEKPYVCDYCGKAFGLSAELVRHQRIHTGEKPYVCQECGKAFTQSSCLSIHRRVHTGEKPYRCGECGKAFAQKANLTQHQRIHTGEKPYSCNVCGKAFVLSAHLNQHLRVHTQETLYQCQRCQKAFRCHSSLSRHQRVHNKQQYCL.

A KRAB domain is found at 6–75 (VTLKDVGMDF…AGGSPEATSP (70 aa)). Disordered regions lie at residues 47-81 (PPRP…TETK) and 140-164 (NGES…TVST). Residues 71–81 (EATSPDVTETK) show a composition bias toward polar residues. Residues 145-154 (TECKSHELKR) are compositionally biased toward basic and acidic residues. A Glycyl lysine isopeptide (Lys-Gly) (interchain with G-Cter in SUMO2) cross-link involves residue K148. A C2H2-type 1 zinc finger spans residues 209-231 (YQCSECGKSFSGSYRLTQHWITH). The segment at 265-286 (YVCNEYGTTFSQSTYLWHQKTH) adopts a C2H2-type 2; degenerate zinc-finger fold. Residues 290 to 317 (KPCKSQDSDHPPSHDTQPGEHQKTHTDS) are compositionally biased toward basic and acidic residues. The segment at 290-318 (KPCKSQDSDHPPSHDTQPGEHQKTHTDSK) is disordered. The interaction with SLBP/pre-mRNA complex stretch occupies residues 312 to 552 (KTHTDSKSYN…GFFVSGKILD (241 aa)). 3 C2H2-type zinc fingers span residues 320-342 (YNCN…QKIH), 347-369 (YECS…QKTH), and 375-397 (SECQ…QALH). The C2H2-type 6; degenerate zinc-finger motif lies at 403-425 (YKCNERGKSFRHNSTLKIHQRVH). K419 participates in a covalent cross-link: Glycyl lysine isopeptide (Lys-Gly) (interchain with G-Cter in SUMO2). 4 C2H2-type zinc fingers span residues 431–453 (YKCS…RRIH), 459–481 (HKCQ…QAIH), 487–509 (YSCA…QKMH), and 515–537 (YECQ…ESVH). Residues K549 and K558 each participate in a glycyl lysine isopeptide (Lys-Gly) (interchain with G-Cter in SUMO2) cross-link. 2 consecutive C2H2-type zinc fingers follow at residues 562-584 (FKCN…ERIH) and 591-613 (FECD…QRIH). A Glycyl lysine isopeptide (Lys-Gly) (interchain with G-Cter in SUMO2) cross-link involves residue K635. C2H2-type zinc fingers lie at residues 646–668 (FKCN…QLIH), 674–696 (FKCS…ERTH), 702–724 (LVCN…QRIH), 730–752 (YVCD…QRIH), 758–780 (YVCQ…RRVH), 786–808 (YRCG…QRIH), 814–836 (YSCN…LRVH), and 842–864 (YQCQ…QRVH).

It belongs to the krueppel C2H2-type zinc-finger protein family. Interacts with the SLBP/pre-mRNA complex but not with SLBP alone. Interacts with LSM11 in a U7 snRNP-dependent manner.

The protein localises to the nucleus. Its function is as follows. Involved in histone 3'-end pre-mRNA processing by associating with U7 snRNP and interacting with SLBP/pre-mRNA complex. Increases histone 3'-end pre-mRNA processing but has no effect on U7 snRNP levels, when overexpressed. Required for cell cycle progression from G1 to S phases. This chain is Zinc finger protein 473 (ZNF473), found in Homo sapiens (Human).